A 409-amino-acid polypeptide reads, in one-letter code: UDP-N-acetylglucosamine--N-acetylmuramyl-(pentapeptide) pyrophosphoryl-undecaprenol N-acetylglucosamine transferase (409 aa).

Residues 11 to 13, Asn125, Arg169, Ser199, and Gln299 contribute to the UDP-N-acetyl-alpha-D-glucosamine site; that span reads TGG.

The protein belongs to the glycosyltransferase 28 family. MurG subfamily.

It localises to the cell membrane. The enzyme catalyses di-trans,octa-cis-undecaprenyl diphospho-N-acetyl-alpha-D-muramoyl-L-alanyl-D-glutamyl-meso-2,6-diaminopimeloyl-D-alanyl-D-alanine + UDP-N-acetyl-alpha-D-glucosamine = di-trans,octa-cis-undecaprenyl diphospho-[N-acetyl-alpha-D-glucosaminyl-(1-&gt;4)]-N-acetyl-alpha-D-muramoyl-L-alanyl-D-glutamyl-meso-2,6-diaminopimeloyl-D-alanyl-D-alanine + UDP + H(+). Its pathway is cell wall biogenesis; peptidoglycan biosynthesis. Its function is as follows. Cell wall formation. Catalyzes the transfer of a GlcNAc subunit on undecaprenyl-pyrophosphoryl-MurNAc-pentapeptide (lipid intermediate I) to form undecaprenyl-pyrophosphoryl-MurNAc-(pentapeptide)GlcNAc (lipid intermediate II). The protein is UDP-N-acetylglucosamine--N-acetylmuramyl-(pentapeptide) pyrophosphoryl-undecaprenol N-acetylglucosamine transferase of Clostridioides difficile (strain 630) (Peptoclostridium difficile).